The following is a 492-amino-acid chain: N-succinylglutamate 5-semialdehyde dehydrogenase (492 aa).

An NAD(+)-binding site is contributed by 220 to 225; sequence GSANTG. Active-site residues include glutamate 243 and cysteine 277.

This sequence belongs to the aldehyde dehydrogenase family. AstD subfamily.

The enzyme catalyses N-succinyl-L-glutamate 5-semialdehyde + NAD(+) + H2O = N-succinyl-L-glutamate + NADH + 2 H(+). It participates in amino-acid degradation; L-arginine degradation via AST pathway; L-glutamate and succinate from L-arginine: step 4/5. Functionally, catalyzes the NAD-dependent reduction of succinylglutamate semialdehyde into succinylglutamate. This chain is N-succinylglutamate 5-semialdehyde dehydrogenase, found in Escherichia fergusonii (strain ATCC 35469 / DSM 13698 / CCUG 18766 / IAM 14443 / JCM 21226 / LMG 7866 / NBRC 102419 / NCTC 12128 / CDC 0568-73).